The sequence spans 158 residues: NAD(P)H-quinone oxidoreductase subunit J, chloroplastic (158 aa).

It belongs to the complex I 30 kDa subunit family. In terms of assembly, NDH is composed of at least 16 different subunits, 5 of which are encoded in the nucleus.

Its subcellular location is the plastid. It localises to the chloroplast thylakoid membrane. The catalysed reaction is a plastoquinone + NADH + (n+1) H(+)(in) = a plastoquinol + NAD(+) + n H(+)(out). The enzyme catalyses a plastoquinone + NADPH + (n+1) H(+)(in) = a plastoquinol + NADP(+) + n H(+)(out). Functionally, NDH shuttles electrons from NAD(P)H:plastoquinone, via FMN and iron-sulfur (Fe-S) centers, to quinones in the photosynthetic chain and possibly in a chloroplast respiratory chain. The immediate electron acceptor for the enzyme in this species is believed to be plastoquinone. Couples the redox reaction to proton translocation, and thus conserves the redox energy in a proton gradient. In Illicium oligandrum (Star anise), this protein is NAD(P)H-quinone oxidoreductase subunit J, chloroplastic.